The chain runs to 118 residues: ATP synthase subunit gamma, chloroplastic (118 aa).

A disulfide bridge connects residues Cys30 and Cys36.

It belongs to the ATPase gamma chain family. F-type ATPases have 2 components, CF(1) - the catalytic core - and CF(0) - the membrane proton channel. CF(1) has five subunits: alpha(3), beta(3), gamma(1), delta(1), epsilon(1). CF(0) has four main subunits: a, b, b' and c.

Its subcellular location is the plastid. It is found in the chloroplast thylakoid membrane. In terms of biological role, produces ATP from ADP in the presence of a proton gradient across the membrane. The gamma chain is believed to be important in regulating ATPase activity and the flow of protons through the CF(0) complex. Its function is as follows. Inceptin is a proteolytic fragment produced by insect larvae that previously ingested the protein. This peptide mediate plant perception of herbivory through the induction of volatile, phenylpropanoid and protease inhibitor defenses such as ethylene, jasmonic acid and salicylic acid for example. The polypeptide is ATP synthase subunit gamma, chloroplastic (Vigna unguiculata (Cowpea)).